We begin with the raw amino-acid sequence, 528 residues long: Probable feruloyl esterase B-1 (528 aa).

The N-terminal stretch at 1–19 is a signal peptide; that stretch reads MMWWFLLIGLASAAATASS. 6 disulfide bridges follow: Cys-29-Cys-78, Cys-64-Cys-117, Cys-190-Cys-445, Cys-259-Cys-276, Cys-285-Cys-295, and Cys-505-Cys-527. Residues Asn-83 and Asn-101 are each glycosylated (N-linked (GlcNAc...) asparagine). Catalysis depends on Ser-191, which acts as the Acyl-ester intermediate. Ca(2+) is bound by residues Asp-260, Asp-263, Ala-265, Asp-267, and Ile-269. Residues Asn-286, Asn-354, and Asn-385 are each glycosylated (N-linked (GlcNAc...) asparagine). Active-site charge relay system residues include Asp-404 and His-444.

This sequence belongs to the tannase family.

The protein resides in the secreted. It catalyses the reaction feruloyl-polysaccharide + H2O = ferulate + polysaccharide.. In terms of biological role, involved in degradation of plant cell walls. Hydrolyzes the feruloyl-arabinose ester bond in arabinoxylans as well as the feruloyl-galactose and feruloyl-arabinose ester bonds in pectin. In Aspergillus fumigatus (strain CBS 144.89 / FGSC A1163 / CEA10) (Neosartorya fumigata), this protein is Probable feruloyl esterase B-1 (faeB-1).